Consider the following 972-residue polypeptide: Cycloisomaltooligosaccharide glucanotransferase (972 aa).

Residues 1–38 (MVRFMYALRKRRLSLLLAMSLLVMCVASVVSPPPQALA) form the signal peptide. CBM6 domains follow at residues 421 to 546 (TRYE…LTLG) and 748 to 871 (DIYE…LDLD).

The protein belongs to the glycosyl hydrolase 66 family. In terms of assembly, monomer.

It carries out the reaction cyclizes part of a (1-&gt;6)-alpha-D-glucan chain by formation of a (1-&gt;6)-alpha-D-glucosidic bond.. Functionally, produces cycloisomaltooligosaccharide from dextran containing 7, 8 or 9 glucose units. The enzyme is specific for (1-&gt;6)-alpha-D-glucans (dextrans) and, without activity toward (1-&gt;4)-alpha-D-glucans, such as amylose. It also has no activity on oligosaccharides, such as amylopectin and pullulan, containing (1-&gt;6)-alpha-D-glucosidic linkages at branch points. This chain is Cycloisomaltooligosaccharide glucanotransferase, found in Niallia circulans (Bacillus circulans).